A 215-amino-acid chain; its full sequence is Transcription elongation factor A protein-like 4 (215 aa).

Residue Met1 is modified to N-acetylmethionine. The segment at 1-133 is disordered; that stretch reads MEKLYSENEG…RKAKRKTNKG (133 aa). Phosphoserine is present on residues Ser6, Ser88, and Ser102. Basic and acidic residues predominate over residues 25 to 102; sequence QDERKPEVTC…KPEIEGKPES (78 aa).

This sequence belongs to the TFS-II family. TFA subfamily.

The protein resides in the nucleus. Its function is as follows. May be involved in transcriptional regulation. The protein is Transcription elongation factor A protein-like 4 (TCEAL4) of Homo sapiens (Human).